An 878-amino-acid polypeptide reads, in one-letter code: Phosphoenolpyruvate carboxylase (878 aa).

Catalysis depends on residues histidine 140 and lysine 545.

This sequence belongs to the PEPCase type 1 family. It depends on Mg(2+) as a cofactor.

The catalysed reaction is oxaloacetate + phosphate = phosphoenolpyruvate + hydrogencarbonate. Forms oxaloacetate, a four-carbon dicarboxylic acid source for the tricarboxylic acid cycle. This Pseudomonas paraeruginosa (strain DSM 24068 / PA7) (Pseudomonas aeruginosa (strain PA7)) protein is Phosphoenolpyruvate carboxylase.